Consider the following 147-residue polypeptide: uncharacterized protein (147 aa).

The next 4 membrane-spanning stretches (helical) occupy residues 13–33 (LSLVFGLLFTVSGIIEIIIGL), 45–65 (LFVGDVFGGLALLAVGIAYFL), 80–100 (YLFTASIIGLGIGVIAFLILI), and 116–136 (WGFFNDLTVYLVLGMLAIIPY).

The protein resides in the cell membrane. This is an uncharacterized protein from Methanocaldococcus jannaschii (strain ATCC 43067 / DSM 2661 / JAL-1 / JCM 10045 / NBRC 100440) (Methanococcus jannaschii).